The primary structure comprises 205 residues: MTKRSEAKYKIDRRMGQNIWGRPKSPVNRREYGPGQHGQRRKGKLSDFGVQLRAKQKLKGYYANISERQFHSIYVEATRLKGDSGENLIGLLERRLDTVVYRAKFVSTMFAARQFINHGHVKVNGKRVNIASYKVKVGDLVEVKESSKQLTFVLEANQLAERDVPDFIEVDHGKMTAKFIRIPHLSDVPFAVQMEPHLIVEFYSR.

Residues 18–46 (NIWGRPKSPVNRREYGPGQHGQRRKGKLS) form a disordered region. The 64-residue stretch at 94–157 (RRLDTVVYRA…KQLTFVLEAN (64 aa)) folds into the S4 RNA-binding domain.

Belongs to the universal ribosomal protein uS4 family. In terms of assembly, part of the 30S ribosomal subunit. Contacts protein S5. The interaction surface between S4 and S5 is involved in control of translational fidelity.

Its function is as follows. One of the primary rRNA binding proteins, it binds directly to 16S rRNA where it nucleates assembly of the body of the 30S subunit. In terms of biological role, with S5 and S12 plays an important role in translational accuracy. In Rhodopseudomonas palustris (strain BisB18), this protein is Small ribosomal subunit protein uS4.